A 220-amino-acid chain; its full sequence is Ribosomal RNA small subunit methyltransferase Nep1 (220 aa).

S-adenosyl-L-methionine is bound by residues glycine 178, glycine 183, and leucine 196–leucine 201.

This sequence belongs to the class IV-like SAM-binding methyltransferase superfamily. RNA methyltransferase NEP1 family. In terms of assembly, homodimer.

The enzyme catalyses a pseudouridine in rRNA + S-adenosyl-L-methionine = an N(1)-methylpseudouridine in rRNA + S-adenosyl-L-homocysteine + H(+). In terms of biological role, methyltransferase involved in ribosomal biogenesis. Specifically catalyzes the N1-methylation of the pseudouridine corresponding to position 914 in M.jannaschii 16S rRNA. The polypeptide is Ribosomal RNA small subunit methyltransferase Nep1 (Thermococcus kodakarensis (strain ATCC BAA-918 / JCM 12380 / KOD1) (Pyrococcus kodakaraensis (strain KOD1))).